A 220-amino-acid polypeptide reads, in one-letter code: Charged multivesicular body protein 4b (220 aa).

2 disordered regions span residues Met1 to Glu22 and Glu180 to Asn220. Coiled-coil stretches lie at residues Gln21–Glu88 and Ile123–Ile181.

Belongs to the SNF7 family. As to quaternary structure, probable core component of the endosomal sorting required for transport complex III (ESCRT-III). ESCRT-III components are thought to multimerize to form a flat lattice on the perimeter membrane of the endosome.

Its subcellular location is the cytoplasm. The protein resides in the cytosol. It is found in the late endosome membrane. The protein localises to the midbody. Probable core component of the endosomal sorting required for transport complex III (ESCRT-III) which is involved in multivesicular bodies (MVBs) formation and sorting of endosomal cargo proteins into MVBs. MVBs contain intraluminal vesicles (ILVs) that are generated by invagination and scission from the limiting membrane of the endosome and mostly are delivered to lysosomes enabling degradation of membrane proteins, such as stimulated growth factor receptors, lysosomal enzymes and lipids. In Danio rerio (Zebrafish), this protein is Charged multivesicular body protein 4b (chmp4b).